The following is a 459-amino-acid chain: Bifunctional protein GlmU (459 aa).

The segment at 1–229 (MSNYAIILAA…FDESLGVNDR (229 aa)) is pyrophosphorylase. UDP-N-acetyl-alpha-D-glucosamine contacts are provided by residues 8 to 11 (LAAG), lysine 22, glutamine 72, and 77 to 78 (GT). Mg(2+) is bound at residue aspartate 102. UDP-N-acetyl-alpha-D-glucosamine contacts are provided by glycine 139, glutamate 154, asparagine 169, and asparagine 227. Position 227 (asparagine 227) interacts with Mg(2+). Positions 230-250 (VALATAEKVMRHRIARQHMVN) are linker. Residues 251 to 459 (GVTVVNPDSA…NKKPHHPSQK (209 aa)) form an N-acetyltransferase region. UDP-N-acetyl-alpha-D-glucosamine-binding residues include arginine 332 and lysine 350. Histidine 362 functions as the Proton acceptor in the catalytic mechanism. Residues tyrosine 365 and asparagine 376 each contribute to the UDP-N-acetyl-alpha-D-glucosamine site. Acetyl-CoA is bound by residues alanine 379, 385-386 (NY), serine 404, alanine 422, and arginine 439.

In the N-terminal section; belongs to the N-acetylglucosamine-1-phosphate uridyltransferase family. The protein in the C-terminal section; belongs to the transferase hexapeptide repeat family. In terms of assembly, homotrimer. It depends on Mg(2+) as a cofactor.

It is found in the cytoplasm. It carries out the reaction alpha-D-glucosamine 1-phosphate + acetyl-CoA = N-acetyl-alpha-D-glucosamine 1-phosphate + CoA + H(+). The enzyme catalyses N-acetyl-alpha-D-glucosamine 1-phosphate + UTP + H(+) = UDP-N-acetyl-alpha-D-glucosamine + diphosphate. The protein operates within nucleotide-sugar biosynthesis; UDP-N-acetyl-alpha-D-glucosamine biosynthesis; N-acetyl-alpha-D-glucosamine 1-phosphate from alpha-D-glucosamine 6-phosphate (route II): step 2/2. It functions in the pathway nucleotide-sugar biosynthesis; UDP-N-acetyl-alpha-D-glucosamine biosynthesis; UDP-N-acetyl-alpha-D-glucosamine from N-acetyl-alpha-D-glucosamine 1-phosphate: step 1/1. Its pathway is bacterial outer membrane biogenesis; LPS lipid A biosynthesis. Functionally, catalyzes the last two sequential reactions in the de novo biosynthetic pathway for UDP-N-acetylglucosamine (UDP-GlcNAc). The C-terminal domain catalyzes the transfer of acetyl group from acetyl coenzyme A to glucosamine-1-phosphate (GlcN-1-P) to produce N-acetylglucosamine-1-phosphate (GlcNAc-1-P), which is converted into UDP-GlcNAc by the transfer of uridine 5-monophosphate (from uridine 5-triphosphate), a reaction catalyzed by the N-terminal domain. In Streptococcus agalactiae serotype V (strain ATCC BAA-611 / 2603 V/R), this protein is Bifunctional protein GlmU.